Here is a 237-residue protein sequence, read N- to C-terminus: Large ribosomal subunit protein uL1 (237 aa).

It belongs to the universal ribosomal protein uL1 family. Part of the 50S ribosomal subunit.

In terms of biological role, binds directly to 23S rRNA. The L1 stalk is quite mobile in the ribosome, and is involved in E site tRNA release. Protein L1 is also a translational repressor protein, it controls the translation of the L11 operon by binding to its mRNA. This Rickettsia typhi (strain ATCC VR-144 / Wilmington) protein is Large ribosomal subunit protein uL1.